The sequence spans 345 residues: RNA polymerase II holoenzyme cyclin-like subunit (345 aa).

Residues 23–147 (ESRRKLLLLE…KLAEFEFYLI (125 aa)) enclose the Cyclin N-terminal domain.

It belongs to the cyclin family. Cyclin C subfamily. Component of the SRB8-11 complex, a regulatory module of the Mediator complex.

It is found in the nucleus. In terms of biological role, component of the SRB8-11 complex. The SRB8-11 complex is a regulatory module of the Mediator complex which is itself involved in regulation of basal and activated RNA polymerase II-dependent transcription. The SRB8-11 complex may be involved in the transcriptional repression of a subset of genes regulated by Mediator. It may inhibit the association of the Mediator complex with RNA polymerase II to form the holoenzyme complex. The SRB8-11 complex phosphorylates the C-terminal domain (CTD) of the largest subunit of RNA polymerase II. The sequence is that of RNA polymerase II holoenzyme cyclin-like subunit (SSN8) from Debaryomyces hansenii (strain ATCC 36239 / CBS 767 / BCRC 21394 / JCM 1990 / NBRC 0083 / IGC 2968) (Yeast).